Here is a 472-residue protein sequence, read N- to C-terminus: Putative F-box/LRR-repeat protein At5g54820 (472 aa).

The F-box domain maps to 6 to 54; it reads QDRLSSLPDILLIMIISFLPLKECVRTSVLSKRWRYLCLETTNLSFKES. LRR repeat units lie at residues 58 to 87, 135 to 164, 183 to 208, 225 to 250, 283 to 308, and 338 to 363; these read NPDI…SITQ, NGDI…KIYG, IGWV…SIKN, VIEH…KYSG, SSRI…TVCP, and MHTK…GFDI.

The sequence is that of Putative F-box/LRR-repeat protein At5g54820 from Arabidopsis thaliana (Mouse-ear cress).